The following is a 231-amino-acid chain: DNA mismatch repair protein MutH (231 aa).

It belongs to the MutH family.

It localises to the cytoplasm. Sequence-specific endonuclease that cleaves unmethylated GATC sequences. It is involved in DNA mismatch repair. This is DNA mismatch repair protein MutH from Salmonella paratyphi A (strain ATCC 9150 / SARB42).